The following is a 447-amino-acid chain: Tubulin beta-2 chain (447 aa).

Q11, E69, S138, G142, T143, G144, N204, and N226 together coordinate GTP. E69 contributes to the Mg(2+) binding site. A disordered region spans residues 419–447 (VSEYQQYQDATADDEGEYEDEEEEADLQD). Residues 429-447 (TADDEGEYEDEEEEADLQD) show a composition bias toward acidic residues.

This sequence belongs to the tubulin family. Dimer of alpha and beta chains. A typical microtubule is a hollow water-filled tube with an outer diameter of 25 nm and an inner diameter of 15 nM. Alpha-beta heterodimers associate head-to-tail to form protofilaments running lengthwise along the microtubule wall with the beta-tubulin subunit facing the microtubule plus end conferring a structural polarity. Microtubules usually have 13 protofilaments but different protofilament numbers can be found in some organisms and specialized cells. It depends on Mg(2+) as a cofactor. In terms of tissue distribution, expressed in leaf sheaths and suspension cultured cells.

It is found in the cytoplasm. The protein localises to the cytoskeleton. Tubulin is the major constituent of microtubules, a cylinder consisting of laterally associated linear protofilaments composed of alpha- and beta-tubulin heterodimers. Microtubules grow by the addition of GTP-tubulin dimers to the microtubule end, where a stabilizing cap forms. Below the cap, tubulin dimers are in GDP-bound state, owing to GTPase activity of alpha-tubulin. The protein is Tubulin beta-2 chain (TUBB2) of Oryza sativa subsp. japonica (Rice).